A 156-amino-acid chain; its full sequence is Small ribosomal subunit protein uS7 (156 aa).

This sequence belongs to the universal ribosomal protein uS7 family. In terms of assembly, part of the 30S ribosomal subunit. Contacts proteins S9 and S11.

Its function is as follows. One of the primary rRNA binding proteins, it binds directly to 16S rRNA where it nucleates assembly of the head domain of the 30S subunit. Is located at the subunit interface close to the decoding center, probably blocks exit of the E-site tRNA. The polypeptide is Small ribosomal subunit protein uS7 (Rhizobium etli (strain ATCC 51251 / DSM 11541 / JCM 21823 / NBRC 15573 / CFN 42)).